We begin with the raw amino-acid sequence, 429 residues long: SET domain-containing protein 8 (429 aa).

Residues 17 to 232 form the SET domain; the sequence is KQITIKKIRK…ENEEVTINYG (216 aa).

It belongs to the class V-like SAM-binding methyltransferase superfamily.

It is found in the cytoplasm. It localises to the nucleus. The polypeptide is SET domain-containing protein 8 (set8) (Schizosaccharomyces pombe (strain 972 / ATCC 24843) (Fission yeast)).